The following is a 295-amino-acid chain: MQAVLNFPDLSPELFSISLFGMEFALRWYALAYIAGIVIAWRLAVLATRRAALWPANTPPMAPARIEDLLTWIILGVILGGRLGFVLFYQPAYYLANPTEILMVWQGGMAFHGGLLGVVIAAWLYSLRHNIPKLSLADLITHTVAPGLLLGRLANFINAELWGRPSDLPWAVIFPGPAAQACPGVVGLCARHPSQLYEAALEGLLLGTLLLWLVWRRGALKRPGLITGVFLAGYGLSRFVVEFFRQPDAQFVTPGNPLGLAWQVGEYGLTMGQLLSLPMIALGLWFVLRARAVPA.

4 helical membrane passes run 28 to 48 (WYAL…VLAT), 69 to 89 (LLTW…VLFY), 101 to 121 (ILMV…VVIA), and 131 to 151 (IPKL…LLLG). Position 152 (R152) interacts with a 1,2-diacyl-sn-glycero-3-phospho-(1'-sn-glycerol). Transmembrane regions (helical) follow at residues 195–215 (QLYE…WLVW), 224–244 (GLIT…VEFF), and 268–288 (GLTM…WFVL).

This sequence belongs to the Lgt family.

Its subcellular location is the cell inner membrane. It carries out the reaction L-cysteinyl-[prolipoprotein] + a 1,2-diacyl-sn-glycero-3-phospho-(1'-sn-glycerol) = an S-1,2-diacyl-sn-glyceryl-L-cysteinyl-[prolipoprotein] + sn-glycerol 1-phosphate + H(+). It functions in the pathway protein modification; lipoprotein biosynthesis (diacylglyceryl transfer). Catalyzes the transfer of the diacylglyceryl group from phosphatidylglycerol to the sulfhydryl group of the N-terminal cysteine of a prolipoprotein, the first step in the formation of mature lipoproteins. The sequence is that of Phosphatidylglycerol--prolipoprotein diacylglyceryl transferase from Ruegeria pomeroyi (strain ATCC 700808 / DSM 15171 / DSS-3) (Silicibacter pomeroyi).